A 3473-amino-acid polypeptide reads, in one-letter code: Genome polyprotein (3473 aa).

Residues 514–604 adopt a coiled-coil conformation; it reads EVQDALEKSM…RNDIEALKKK (91 aa). Disordered regions lie at residues 602 to 644 and 1278 to 1306; these read KKKP…SEAQ and YLAD…EGEI. 2 stretches are compositionally biased toward polar residues: residues 607–622 and 1278–1295; these read QSVT…SGTA and YLAD…SIVN. Transmembrane regions (helical) follow at residues 1496-1516 and 1595-1615; these read DKWI…LHYY and MSSL…GKIP. The SF3 helicase domain maps to 1751–1917; it reads LELMNESYTY…PDVPKNEANP (167 aa). 1777-1784 lines the ATP pocket; the sequence is GAPGVGKS. Residues 2363 to 2383 form a helical membrane-spanning segment; it reads ILLAIGASVAVAGVAVGAVIL. Positions 2394–2404 are enriched in acidic residues; the sequence is EDEEIEGEEGE. Disordered regions lie at residues 2394-2415 and 2438-2465; these read EDEE…ESDG and VAEA…LGLS. Positions 2438-2451 are enriched in basic and acidic residues; the sequence is VAEAHEEKDAEKPR. The Peptidase C3 domain occupies 2632 to 2850; sequence GVDRDLSMTN…YAETLTQEHL (219 aa). Residues His-2680, Glu-2717, and Cys-2811 each act as for picornain 3C-like protease activity in the active site. A RdRp catalytic domain is found at 3155–3286; it reads TKGFAGDYSK…SVHEEFLDVY (132 aa).

Specific enzymatic cleavages by picornain 3C-like protease in vivo yield mature proteins. Picornain 3C-like protease is autocatalytically processed.

The protein localises to the virion. Its subcellular location is the host membrane. It carries out the reaction RNA(n) + a ribonucleoside 5'-triphosphate = RNA(n+1) + diphosphate. In terms of biological role, picornain 3C-like protease is a thiol protease that probably cleaves the polyprotein. The protein is Genome polyprotein of Oryza sativa (Rice).